A 408-amino-acid chain; its full sequence is Phosphoglycerate kinase (408 aa).

Residues 24–26 (DLN), Arg-40, 63–66 (HLGR), Arg-122, and Arg-166 contribute to the substrate site. Residues Lys-216, Gly-304, Glu-335, and 364–367 (GGDS) contribute to the ATP site.

Belongs to the phosphoglycerate kinase family. In terms of assembly, monomer.

The protein resides in the cytoplasm. The enzyme catalyses (2R)-3-phosphoglycerate + ATP = (2R)-3-phospho-glyceroyl phosphate + ADP. The protein operates within carbohydrate degradation; glycolysis; pyruvate from D-glyceraldehyde 3-phosphate: step 2/5. In Mycolicibacterium smegmatis (strain ATCC 700084 / mc(2)155) (Mycobacterium smegmatis), this protein is Phosphoglycerate kinase.